The primary structure comprises 462 residues: ATP synthase subunit beta (462 aa).

Gly152–Thr159 provides a ligand contact to ATP.

Belongs to the ATPase alpha/beta chains family. F-type ATPases have 2 components, CF(1) - the catalytic core - and CF(0) - the membrane proton channel. CF(1) has five subunits: alpha(3), beta(3), gamma(1), delta(1), epsilon(1). CF(0) has three main subunits: a(1), b(2) and c(9-12). The alpha and beta chains form an alternating ring which encloses part of the gamma chain. CF(1) is attached to CF(0) by a central stalk formed by the gamma and epsilon chains, while a peripheral stalk is formed by the delta and b chains.

The protein localises to the cell inner membrane. It catalyses the reaction ATP + H2O + 4 H(+)(in) = ADP + phosphate + 5 H(+)(out). Functionally, produces ATP from ADP in the presence of a proton gradient across the membrane. The catalytic sites are hosted primarily by the beta subunits. This chain is ATP synthase subunit beta, found in Blochmanniella pennsylvanica (strain BPEN).